A 1529-amino-acid polypeptide reads, in one-letter code: Slit homolog 2 protein (1529 aa).

The N-terminal stretch at 1–30 (MRGVGWQMLSLSLGLVLAILNKVAPQACPA) is a signal peptide. Positions 31-55 (QCSCSGSTVDCHGLALRSVPRNIPR) constitute an LRRNT domain. LRR repeat units follow at residues 56-77 (NTERLDLNGNNITRITKTDFAG), 80-101 (HLRVLQLMENKISTIERGAFQD), 104-125 (ELERLRLNRNHLQLFPELLFLG), 128-149 (KLYRLDLSENQIQAIPRKAFRG), 152-173 (DIKNLQLDYNQISCIEDGAFRA), and 176-197 (DLEVLTLNNNNITRLSVASFNH). Asn-66 carries an N-linked (GlcNAc...) asparagine glycan. Asn-186 carries an N-linked (GlcNAc...) asparagine glycan. Residues 209-259 (NNLYCDCHLAWLSDWLRQRPRVGLYTQCMGPSHLRGHNVAEVQKREFVCSG) form the LRRCT 1 domain. The region spanning 264 to 300 (MAPSCSVLHCPAACTCSNNIVDCRGKGLTEIPTNLPE) is the LRRNT 2 domain. Cys-277 and Cys-286 are oxidised to a cystine. LRR repeat units follow at residues 301–322 (TITEIRLEQNTIKVIPPGAFSP), 325–346 (KLRRIDLSNNQISELAPDAFQG), 349–370 (SLNSLVLYGNKITELPKSLFEG), 373–394 (SLQLLLLNANKINCLRVDAFQD), and 397–418 (NLNLLSLYDNKLQTIAKGTFSP). Residues 430-480 (NPFICDCHLKWLADYLHTNPIETSGARCTSPRRLANKRIGQIKSKKFRCSA) form the LRRCT 2 domain. Disulfide bonds link Cys-434/Cys-457, Cys-436/Cys-478, Cys-506/Cys-512, and Cys-510/Cys-519. The LRRNT 3 domain maps to 497–533 (SGDCFADLACPEKCRCEGTTVDCSNQKLNKIPEHIPQ). 5 LRR repeats span residues 534 to 555 (YTAELRLNNNEFTVLEATGIFK), 559 to 580 (QLRKINFSNNKITDIEEGAFEG), 583 to 604 (GVNEILLTSNRLENVQHKMFKG), 607 to 628 (SLKTLMLRSNRITCVGNDSFIG), and 631 to 652 (SVRLLSLYDNQITTVAPGAFDT). N-linked (GlcNAc...) asparagine glycosylation occurs at Asn-564. Asn-623 carries an N-linked (GlcNAc...) asparagine glycan. One can recognise an LRRCT 3 domain in the interval 664–714 (NPFNCNCYLAWLGEWLRKKRIVTGNPRCQKPYFLKEIPIQDVAIQDFTCDD). Intrachain disulfides connect Cys-668–Cys-691, Cys-670–Cys-712, Cys-727–Cys-733, and Cys-731–Cys-740. Residues 718–754 (DNSCSPLSRCPTECTCLDTVVRCSNKGLKVLPKGIPR) enclose the LRRNT 4 domain. LRR repeat units follow at residues 755 to 777 (DVTELYLDGNQFTLVPKELSNYK), 778 to 799 (HLTLIDLSNNRISTLSNQSFSN), 802 to 823 (QLLTLILSYNRLRCIPPRTFDG), and 826 to 847 (SLRLLSLHGNDISVVPEGAFND). N-linked (GlcNAc...) asparagine glycosylation is found at Asn-794 and Asn-799. Positions 859-909 (NPLYCDCNMQWLSDWVKSEYKEPGIARCAGPGEMADKLLLTTPSKKFTCQG) constitute an LRRCT 4 domain. 20 cysteine pairs are disulfide-bonded: Cys-863–Cys-886, Cys-865–Cys-907, Cys-922–Cys-933, Cys-927–Cys-943, Cys-945–Cys-954, Cys-961–Cys-972, Cys-966–Cys-984, Cys-986–Cys-995, Cys-1002–Cys-1013, Cys-1007–Cys-1022, Cys-1024–Cys-1033, Cys-1040–Cys-1053, Cys-1047–Cys-1062, Cys-1064–Cys-1073, Cys-1080–Cys-1091, Cys-1085–Cys-1100, Cys-1102–Cys-1111, Cys-1125–Cys-1136, Cys-1130–Cys-1145, and Cys-1147–Cys-1156. 2 EGF-like domains span residues 918-955 (KCNPCLSNPCKNDGTCNSDPVDFYRCTCPYGFKGQDCD) and 957-996 (PIHACISNPCKHGGTCHLKEGEEDGFWCICADGFEGENCE). Residues 998–1034 (NVDDCEDNDCENNSTCVDGINNYTCLCPPEYTGELCE) enclose the EGF-like 3; calcium-binding domain. 3 N-linked (GlcNAc...) asparagine glycosylation sites follow: Asn-1009, Asn-1010, and Asn-1019. The 39-residue stretch at 1036–1074 (KLDFCAQDLNPCQHDSKCILTPKGFKCDCTPGYVGEHCD) folds into the EGF-like 4 domain. The 37-residue stretch at 1076-1112 (DFDDCQDNKCKNGAHCTDAVNGYTCICPEGYSGLFCE) folds into the EGF-like 5; calcium-binding domain. In terms of domain architecture, EGF-like 6 spans 1121–1157 (RTSPCDNFDCQNGAQCIVRINEPICQCLPGYQGEKCE). The Laminin G-like domain occupies 1160–1333 (VSVNFINKES…PMQTGILPGC (174 aa)). 3 N-linked (GlcNAc...) asparagine glycosylation sites follow: Asn-1183, Asn-1266, and Asn-1300. 14 cysteine pairs are disulfide-bonded: Cys-1307–Cys-1333, Cys-1336–Cys-1346, Cys-1341–Cys-1356, Cys-1358–Cys-1367, Cys-1375–Cys-1385, Cys-1380–Cys-1395, Cys-1397–Cys-1406, Cys-1416–Cys-1426, Cys-1421–Cys-1436, Cys-1438–Cys-1447, Cys-1453–Cys-1492, Cys-1471–Cys-1506, Cys-1482–Cys-1522, and Cys-1486–Cys-1524. Residues 1332–1368 (GCEPCHKKVCAHGTCQPSSQAGFTCECQEGWMGPLCD) form the EGF-like 7 domain. Residues 1453-1528 (CRGERIRDYY…VVKCGCTRCV (76 aa)) form the CTCK domain.

Interacts with GREM1. Homodimer. Binds ROBO1 and ROBO2 with high affinity. In terms of tissue distribution, fetal lung and kidney, and adult spinal cord. Weak expression in adult adrenal gland, thyroid, trachea and other tissues examined.

The protein resides in the secreted. Functionally, thought to act as molecular guidance cue in cellular migration, and function appears to be mediated by interaction with roundabout homolog receptors. During neural development involved in axonal navigation at the ventral midline of the neural tube and projection of axons to different regions. SLIT1 and SLIT2 seem to be essential for midline guidance in the forebrain by acting as repulsive signal preventing inappropriate midline crossing by axons projecting from the olfactory bulb. In spinal cord development may play a role in guiding commissural axons once they reached the floor plate by modulating the response to netrin. In vitro, silences the attractive effect of NTN1 but not its growth-stimulatory effect and silencing requires the formation of a ROBO1-DCC complex. May be implicated in spinal cord midline post-crossing axon repulsion. In vitro, only commissural axons that crossed the midline responded to SLIT2. In the developing visual system appears to function as repellent for retinal ganglion axons by providing a repulsion that directs these axons along their appropriate paths prior to, and after passage through, the optic chiasm. In vitro, collapses and repels retinal ganglion cell growth cones. Seems to play a role in branching and arborization of CNS sensory axons, and in neuronal cell migration. In vitro, Slit homolog 2 protein N-product, but not Slit homolog 2 protein C-product, repels olfactory bulb (OB) but not dorsal root ganglia (DRG) axons, induces OB growth cones collapse and induces branching of DRG axons. Seems to be involved in regulating leukocyte migration. The chain is Slit homolog 2 protein (SLIT2) from Homo sapiens (Human).